The primary structure comprises 152 residues: Transcriptional regulator MraZ (152 aa).

SpoVT-AbrB domains are found at residues Ala-5 to Glu-52 and Ala-81 to Ala-124.

The protein belongs to the MraZ family. In terms of assembly, forms oligomers.

The protein localises to the cytoplasm. The protein resides in the nucleoid. In Idiomarina loihiensis (strain ATCC BAA-735 / DSM 15497 / L2-TR), this protein is Transcriptional regulator MraZ.